A 132-amino-acid polypeptide reads, in one-letter code: Small ribosomal subunit protein uS8 (132 aa).

This sequence belongs to the universal ribosomal protein uS8 family. Part of the 30S ribosomal subunit. Contacts proteins S5 and S12.

Its function is as follows. One of the primary rRNA binding proteins, it binds directly to 16S rRNA central domain where it helps coordinate assembly of the platform of the 30S subunit. The chain is Small ribosomal subunit protein uS8 from Francisella tularensis subsp. holarctica (strain FTNF002-00 / FTA).